We begin with the raw amino-acid sequence, 186 residues long: Small ribosomal subunit protein uS4 (186 aa).

An S4 RNA-binding domain is found at 106-170 (RRLQTIVYRK…SPLKDEDHPI (65 aa)). The disordered stretch occupies residues 151–186 (EEEEVDYSPYSPLKDEDHPIRCEARGESPEETAAEE). Residues 163 to 178 (LKDEDHPIRCEARGES) show a composition bias toward basic and acidic residues.

The protein belongs to the universal ribosomal protein uS4 family. In terms of assembly, part of the 30S ribosomal subunit. Contacts protein S5. The interaction surface between S4 and S5 is involved in control of translational fidelity.

One of the primary rRNA binding proteins, it binds directly to 16S rRNA where it nucleates assembly of the body of the 30S subunit. Functionally, with S5 and S12 plays an important role in translational accuracy. In Methanopyrus kandleri (strain AV19 / DSM 6324 / JCM 9639 / NBRC 100938), this protein is Small ribosomal subunit protein uS4.